Here is an 85-residue protein sequence, read N- to C-terminus: Large ribosomal subunit protein bL27 (85 aa).

Residues 1–13 (MAKTKSGGSTSNG) are compositionally biased toward polar residues. Residues 1 to 26 (MAKTKSGGSTSNGRDSKGRRLGQKLG) are disordered.

This sequence belongs to the bacterial ribosomal protein bL27 family.

The sequence is that of Large ribosomal subunit protein bL27 from Mycoplasma mobile (strain ATCC 43663 / 163K / NCTC 11711) (Mesomycoplasma mobile).